A 270-amino-acid chain; its full sequence is Glutamate racemase (270 aa).

Residues 7–8 (DS) and 39–40 (YG) contribute to the substrate site. The active-site Proton donor/acceptor is the C70. Position 71–72 (71–72 (NT)) interacts with substrate. The Proton donor/acceptor role is filled by C194. Residue 195 to 196 (TH) coordinates substrate.

It belongs to the aspartate/glutamate racemases family.

It carries out the reaction L-glutamate = D-glutamate. It functions in the pathway cell wall biogenesis; peptidoglycan biosynthesis. Functionally, provides the (R)-glutamate required for cell wall biosynthesis. The chain is Glutamate racemase from Cereibacter sphaeroides (strain ATCC 17025 / ATH 2.4.3) (Rhodobacter sphaeroides).